We begin with the raw amino-acid sequence, 277 residues long: PHD finger protein ALFIN-LIKE 9 (277 aa).

2 disordered regions span residues 138-206 (KSKA…EEEH) and 255-277 (PSCS…ARPS). Residues 145-160 (SANNHSNSKSKSSNKT) are compositionally biased toward low complexity. Residues 208–260 (ETLCGACGESYGADEFWICCDICEKWFHGKCVKITPAKAEHIKQYKCPSCSGG) form a PHD-type zinc finger. Residues 259 to 270 (GGNGGGGGGSGN) are compositionally biased toward gly residues.

It belongs to the Alfin family. Interacts with H3K4me3 and to a lesser extent with H3K4me2.

Its subcellular location is the nucleus. Histone-binding component that specifically recognizes H3 tails trimethylated on 'Lys-4' (H3K4me3), which mark transcription start sites of virtually all active genes. In Oryza sativa subsp. indica (Rice), this protein is PHD finger protein ALFIN-LIKE 9.